The primary structure comprises 778 residues: Lon protease (778 aa).

One can recognise a Lon N-terminal domain in the interval 4–187 (LPVLPLTDAV…LLVGWVRAHL (184 aa)). Residue 346 to 353 (GPPGVGKT) participates in ATP binding. The 182-residue stretch at 581–762 (TAVPGVATGL…ADVLALALRP (182 aa)) folds into the Lon proteolytic domain. Catalysis depends on residues serine 668 and lysine 711.

It belongs to the peptidase S16 family. Homohexamer. Organized in a ring with a central cavity.

Its subcellular location is the cytoplasm. It carries out the reaction Hydrolysis of proteins in presence of ATP.. Its function is as follows. ATP-dependent serine protease that mediates the selective degradation of mutant and abnormal proteins as well as certain short-lived regulatory proteins. Required for cellular homeostasis and for survival from DNA damage and developmental changes induced by stress. Degrades polypeptides processively to yield small peptide fragments that are 5 to 10 amino acids long. Binds to DNA in a double-stranded, site-specific manner. The chain is Lon protease from Salinispora arenicola (strain CNS-205).